Reading from the N-terminus, the 232-residue chain is MGQKVHPTGIRLGISKPWTSTWYANTADYADNLFNDHQVRQYLTKALKTASLSKIVIERPAKSIRVTIHTARPGVVIGKKGEDVEKLRKHVSKLAGVPAQINIAEVRKPELDGQLVADSIASQLERRVMFRRAMKRAVQNAMRIGAKGIKVQVSGRLGGAEIARAEWYREGRVPLHTFRADIDYATSEANTTYGIIGVKVWIFKGEVLGGLPLTQEQPAQPKKKGRSPKREG.

The region spanning 39-107 is the KH type-2 domain; it reads VRQYLTKALK…PAQINIAEVR (69 aa).

This sequence belongs to the universal ribosomal protein uS3 family. As to quaternary structure, part of the 30S ribosomal subunit. Forms a tight complex with proteins S10 and S14.

Its function is as follows. Binds the lower part of the 30S subunit head. Binds mRNA in the 70S ribosome, positioning it for translation. The polypeptide is Small ribosomal subunit protein uS3 (Pseudoalteromonas atlantica (strain T6c / ATCC BAA-1087)).